Consider the following 338-residue polypeptide: Ketol-acid reductoisomerase (NADP(+)) (338 aa).

Residues 1–181 form the KARI N-terminal Rossmann domain; the sequence is MKVFYDKDAD…GGGRAGIIET (181 aa). NADP(+)-binding positions include 24–27, R47, and S52; that span reads YGSQ. Residue H107 is part of the active site. Residue G133 coordinates NADP(+). The KARI C-terminal knotted domain maps to 182–327; it reads NFREETETDL…AKLRAMMPWI (146 aa). Mg(2+) is bound by residues D190, E194, E226, and E230. S251 serves as a coordination point for substrate.

It belongs to the ketol-acid reductoisomerase family. Mg(2+) is required as a cofactor.

The enzyme catalyses (2R)-2,3-dihydroxy-3-methylbutanoate + NADP(+) = (2S)-2-acetolactate + NADPH + H(+). The catalysed reaction is (2R,3R)-2,3-dihydroxy-3-methylpentanoate + NADP(+) = (S)-2-ethyl-2-hydroxy-3-oxobutanoate + NADPH + H(+). It participates in amino-acid biosynthesis; L-isoleucine biosynthesis; L-isoleucine from 2-oxobutanoate: step 2/4. Its pathway is amino-acid biosynthesis; L-valine biosynthesis; L-valine from pyruvate: step 2/4. Its function is as follows. Involved in the biosynthesis of branched-chain amino acids (BCAA). Catalyzes an alkyl-migration followed by a ketol-acid reduction of (S)-2-acetolactate (S2AL) to yield (R)-2,3-dihydroxy-isovalerate. In the isomerase reaction, S2AL is rearranged via a Mg-dependent methyl migration to produce 3-hydroxy-3-methyl-2-ketobutyrate (HMKB). In the reductase reaction, this 2-ketoacid undergoes a metal-dependent reduction by NADPH to yield (R)-2,3-dihydroxy-isovalerate. This Polynucleobacter asymbioticus (strain DSM 18221 / CIP 109841 / QLW-P1DMWA-1) (Polynucleobacter necessarius subsp. asymbioticus) protein is Ketol-acid reductoisomerase (NADP(+)).